Here is a 348-residue protein sequence, read N- to C-terminus: Dihydroorotase (348 aa).

Zn(2+) is bound by residues histidine 14 and histidine 16. Residues 16 to 18 (HLR) and asparagine 42 contribute to the substrate site. Zn(2+) is bound by residues lysine 100, histidine 137, and histidine 175. At lysine 100 the chain carries N6-carboxylysine. Histidine 137 is a binding site for substrate. Position 220 (leucine 220) interacts with substrate. Aspartate 248 lines the Zn(2+) pocket. Aspartate 248 is an active-site residue. Positions 252 and 264 each coordinate substrate.

It belongs to the metallo-dependent hydrolases superfamily. DHOase family. Class II DHOase subfamily. In terms of assembly, homodimer. The cofactor is Zn(2+).

It catalyses the reaction (S)-dihydroorotate + H2O = N-carbamoyl-L-aspartate + H(+). Its pathway is pyrimidine metabolism; UMP biosynthesis via de novo pathway; (S)-dihydroorotate from bicarbonate: step 3/3. Functionally, catalyzes the reversible cyclization of carbamoyl aspartate to dihydroorotate. The sequence is that of Dihydroorotase from Pseudomonas aeruginosa (strain UCBPP-PA14).